The following is a 510-amino-acid chain: Glycogen synthase (510 aa).

K18 is a binding site for ADP-alpha-D-glucose.

It belongs to the glycosyltransferase 1 family. Bacterial/plant glycogen synthase subfamily.

The enzyme catalyses [(1-&gt;4)-alpha-D-glucosyl](n) + ADP-alpha-D-glucose = [(1-&gt;4)-alpha-D-glucosyl](n+1) + ADP + H(+). It functions in the pathway glycan biosynthesis; glycogen biosynthesis. In terms of biological role, synthesizes alpha-1,4-glucan chains using ADP-glucose. This Bordetella bronchiseptica (strain ATCC BAA-588 / NCTC 13252 / RB50) (Alcaligenes bronchisepticus) protein is Glycogen synthase.